A 581-amino-acid chain; its full sequence is 2-succinyl-5-enolpyruvyl-6-hydroxy-3-cyclohexene-1-carboxylate synthase (581 aa).

The protein belongs to the TPP enzyme family. MenD subfamily. Homodimer. Mg(2+) serves as cofactor. Requires Mn(2+) as cofactor. Thiamine diphosphate is required as a cofactor.

The enzyme catalyses isochorismate + 2-oxoglutarate + H(+) = 5-enolpyruvoyl-6-hydroxy-2-succinyl-cyclohex-3-ene-1-carboxylate + CO2. It participates in quinol/quinone metabolism; 1,4-dihydroxy-2-naphthoate biosynthesis; 1,4-dihydroxy-2-naphthoate from chorismate: step 2/7. It functions in the pathway cofactor biosynthesis; phylloquinone biosynthesis. Catalyzes the thiamine diphosphate-dependent decarboxylation of 2-oxoglutarate and the subsequent addition of the resulting succinic semialdehyde-thiamine pyrophosphate anion to isochorismate to yield 2-succinyl-5-enolpyruvyl-6-hydroxy-3-cyclohexene-1-carboxylate (SEPHCHC). This is 2-succinyl-5-enolpyruvyl-6-hydroxy-3-cyclohexene-1-carboxylate synthase from Gloeothece citriformis (strain PCC 7424) (Cyanothece sp. (strain PCC 7424)).